A 210-amino-acid chain; its full sequence is Ribosomal RNA small subunit methyltransferase G (210 aa).

Residues glycine 77, phenylalanine 82, 100–102, 128–129, and arginine 141 contribute to the S-adenosyl-L-methionine site; these read ERS and VE.

The protein belongs to the methyltransferase superfamily. RNA methyltransferase RsmG family.

The protein localises to the cytoplasm. Specifically methylates the N7 position of a guanine in 16S rRNA. The chain is Ribosomal RNA small subunit methyltransferase G from Borrelia duttonii (strain Ly).